A 91-amino-acid polypeptide reads, in one-letter code: Cytochrome c-554(547) (91 aa).

Heme c contacts are provided by Cys-15, Cys-18, His-19, and Met-64.

Monomer. Post-translationally, binds 1 heme c group covalently per subunit.

The chain is Cytochrome c-554(547) from Halothiobacillus neapolitanus (Thiobacillus neapolitanus).